The chain runs to 482 residues: Putative L-cysteine desulfhydrase 1 (482 aa).

Acidic residues predominate over residues 1–10 (MASIPPDDDA). The segment at 1-45 (MASIPPDDDAAAAAAAGAAENGYGNGKGNGNGPAPRPPPAKRPRS) is disordered. The segment covering 11–22 (AAAAAAGAAENG) has biased composition (low complexity). The residue at position 276 (Lys276) is an N6-(pyridoxal phosphate)lysine.

The protein belongs to the class-V pyridoxal-phosphate-dependent aminotransferase family. It depends on pyridoxal 5'-phosphate as a cofactor.

The enzyme catalyses L-cysteine + H2O = hydrogen sulfide + pyruvate + NH4(+) + H(+). Its function is as follows. Catalyzes the production of hydrogen sulfide (H2S) from cysteine. The sequence is that of Putative L-cysteine desulfhydrase 1 from Oryza sativa subsp. japonica (Rice).